A 358-amino-acid chain; its full sequence is DNA replication and repair protein RecF (358 aa).

An ATP-binding site is contributed by 30–37 (GANGSGKT).

Belongs to the RecF family.

It is found in the cytoplasm. The RecF protein is involved in DNA metabolism; it is required for DNA replication and normal SOS inducibility. RecF binds preferentially to single-stranded, linear DNA. It also seems to bind ATP. The sequence is that of DNA replication and repair protein RecF from Acinetobacter baylyi (strain ATCC 33305 / BD413 / ADP1).